The sequence spans 833 residues: CUB domain-containing protein 1 (833 aa).

Positions 1–29 are cleaved as a signal peptide; the sequence is MAHSACGFSVALLGALLLGTARLLRGTEA. Over 30 to 666 the chain is Extracellular; the sequence is SEIALPQRSG…VTLTPRTVDL (637 aa). Residues asparagine 122, asparagine 180, asparagine 205, asparagine 270, asparagine 310, asparagine 342, and asparagine 386 are each glycosylated (N-linked (GlcNAc...) asparagine). One can recognise a CUB domain in the interval 417-540; sequence CLDHRYCYRQ…QGLIVSYTPY (124 aa). Residues cysteine 476 and cysteine 499 are joined by a disulfide bond. A helical membrane pass occupies residues 667 to 687; it reads AVVIGAAGGGALLLFALVLII. At 688–833 the chain is on the cytoplasmic side; the sequence is CFVKKKKKVD…HTQGPVETEE (146 aa). Position 731 is a phosphotyrosine (tyrosine 731). Positions 783–833 are disordered; it reads AKFTAEELAPSSPPESESEPYTFSHPNKGEIGVRETDIPLLHTQGPVETEE. Over residues 809–819 the composition is skewed to basic and acidic residues; the sequence is NKGEIGVRETD.

Interacts with CDH2/N-cadherin, CDH3/P-cadherin, SDC1/syndecan-1, SDC4/syndecan-4 and the serine protease ST14/MT-SP1. Also interacts SRC and PRKCG/protein kinase C gamma. In terms of processing, phosphorylated on tyrosine by kinases of the SRC family such as SRC and YES as well as by the protein kinase C gamma/PRKCG. Dephosphorylated by phosphotyrosine phosphatases. Also phosphorylated by suramin, a heparin analog. Tyrosine phosphorylated in response to dissociation of integrin alpha-6 beta-4 from laminin-5. Post-translationally, N-glycosylated. A soluble form may also be produced by proteolytic cleavage at the cell surface (shedding). Another peptide of 80 kDa (p80) is present in cultured keratinocytes probably due to tryptic cleavage at an unidentified site on the N-terminal side. Converted to p80 by plasmin, a trypsin-like protease.

The protein resides in the cell membrane. In terms of biological role, may be involved in cell adhesion and cell matrix association. May play a role in the regulation of anchorage versus migration or proliferation versus differentiation via its phosphorylation. May be a novel marker for leukemia diagnosis and for immature hematopoietic stem cell subsets. Belongs to the tetraspanin web involved in tumor progression and metastasis. In Mus musculus (Mouse), this protein is CUB domain-containing protein 1 (Cdcp1).